Consider the following 335-residue polypeptide: Glucokinase (335 aa).

11–16 (ADIGGT) is an ATP binding site.

It belongs to the bacterial glucokinase family.

It is found in the cytoplasm. It catalyses the reaction D-glucose + ATP = D-glucose 6-phosphate + ADP + H(+). The sequence is that of Glucokinase from Xanthomonas campestris pv. campestris (strain B100).